A 155-amino-acid chain; its full sequence is Nascent polypeptide-associated complex subunit beta (155 aa).

Disordered stretches follow at residues 1–39 and 122–155; these read MDQAKLARLQQSVRIGTGKGTPRRKTKKVHKSSGTDDKK and QNMQKKEGEAKKEGEEDDEDIPDLVGETFESKVE. Positions 21 to 31 are enriched in basic residues; that stretch reads TPRRKTKKVHK. Residues 34-99 form the NAC-A/B domain; it reads GTDDKKLQTS…GEEKELTELV (66 aa). Over residues 125 to 135 the composition is skewed to basic and acidic residues; sequence QKKEGEAKKEG.

This sequence belongs to the NAC-beta family. Part of the nascent polypeptide-associated complex (NAC), consisting of EGD2 and EGD1. NAC associates with ribosomes via EGD1.

Its subcellular location is the cytoplasm. The protein localises to the nucleus. Functionally, component of the nascent polypeptide-associated complex (NAC), a dynamic component of the ribosomal exit tunnel, protecting the emerging polypeptides from interaction with other cytoplasmic proteins to ensure appropriate nascent protein targeting. The NAC complex also promotes mitochondrial protein import by enhancing productive ribosome interactions with the outer mitochondrial membrane and blocks the inappropriate interaction of ribosomes translating non-secretory nascent polypeptides with translocation sites in the membrane of the endoplasmic reticulum. EGD1 may act as a transcription factor that exert a negative effect on the expression of several genes that are transcribed by RNA polymerase II. This is Nascent polypeptide-associated complex subunit beta (EGD1) from Coccidioides immitis (strain RS) (Valley fever fungus).